The chain runs to 325 residues: GMP reductase (325 aa).

The active-site Thioimidate intermediate is the C174. 203-226 provides a ligand contact to NADP(+); sequence IIADGGLRTHGDIAKSIRFGATMV.

It belongs to the IMPDH/GMPR family. GuaC type 2 subfamily.

The catalysed reaction is IMP + NH4(+) + NADP(+) = GMP + NADPH + 2 H(+). Its function is as follows. Catalyzes the irreversible NADPH-dependent deamination of GMP to IMP. It functions in the conversion of nucleobase, nucleoside and nucleotide derivatives of G to A nucleotides, and in maintaining the intracellular balance of A and G nucleotides. This is GMP reductase from Staphylococcus epidermidis (strain ATCC 35984 / DSM 28319 / BCRC 17069 / CCUG 31568 / BM 3577 / RP62A).